The following is a 334-amino-acid chain: Probable tRNA pseudouridine synthase B (334 aa).

Aspartate 82 acts as the Nucleophile in catalysis. The region spanning 250–325 is the PUA domain; that stretch reads LPKIWIKDSA…IAVDVEKVFM (76 aa).

Belongs to the pseudouridine synthase TruB family. Type 2 subfamily.

It carries out the reaction uridine(55) in tRNA = pseudouridine(55) in tRNA. Functionally, could be responsible for synthesis of pseudouridine from uracil-55 in the psi GC loop of transfer RNAs. The chain is Probable tRNA pseudouridine synthase B from Pyrococcus abyssi (strain GE5 / Orsay).